Here is a 273-residue protein sequence, read N- to C-terminus: Zinc finger protein 80 (273 aa).

7 C2H2-type zinc fingers span residues 49–71 (YKCKECGSVFNKNSLLVRHQQIH), 77–99 (YECQECGKAFPEKVDFVRHVRIH), 103–127 (KPCKCVECGKVFNRRSHLLCHHQIH), 133–155 (YECSECGRTFSYHSVFIQHRMTH), 161–183 (FGCKECGKSFYYNSSLTRHMKIH), 189–211 (YKCSECGKTFTYHSVFFRHSMTH), and 217–239 (YECKECGKGFYYSYSLTRHTRSH).

This sequence belongs to the krueppel C2H2-type zinc-finger protein family.

Its subcellular location is the nucleus. May be involved in transcriptional regulation. This is Zinc finger protein 80 (ZNF80) from Pongo pygmaeus (Bornean orangutan).